The primary structure comprises 467 residues: Gamma-aminobutyric acid receptor subunit rho-3 (467 aa).

Positions 1 to 24 are cleaved as a signal peptide; that stretch reads MVLAFQLVSFTYIWIILKPNVCAA. Residues 25-266 lie on the Extracellular side of the membrane; it reads SNIKMTHQRC…LFINFVLRRH (242 aa). The 4-aminobutanoate site is built by Arg-111 and Ser-175. Cysteines 184 and 198 form a disulfide. Glu-203 serves as a coordination point for 4-aminobutanoate. Asn-220 carries an N-linked (GlcNAc...) asparagine glycan. A helical membrane pass occupies residues 267 to 287; that stretch reads VFFFVLQTYFPAILMVMLSWV. The Cytoplasmic portion of the chain corresponds to 288–299; that stretch reads SFWIDRRAVPAR. The chain crosses the membrane as a helical span at residues 300–320; the sequence is VSLGITTVLTMSTIITAVSAS. The Extracellular segment spans residues 321–331; sequence MPQVSYLKAVD. Residues 332–352 traverse the membrane as a helical segment; that stretch reads VYLWVSSLFVFLSVIEYAAVN. The interaction with SQSTM1 stretch occupies residues 347 to 448; sequence EYAAVNYLTT…NNHVIDTYSR (102 aa). Over 353 to 446 the chain is Cytoplasmic; the sequence is YLTTVEERKQ…LENNHVIDTY (94 aa). A helical transmembrane segment spans residues 447-467; sequence SRILFPIVYILFNLFYWGVYV.

This sequence belongs to the ligand-gated ion channel (TC 1.A.9) family. Gamma-aminobutyric acid receptor (TC 1.A.9.5) subfamily. GABRR3 sub-subfamily. As to quaternary structure, three rho subunits (rho-1/GBRR1, rho-2/GBRR2 and rho-3/GBRR3) coassemble either to form functional homopentamers or heteropentamers. Forms a ternary complex with SQSTM1 and PRKCZ.

It is found in the postsynaptic cell membrane. It localises to the cell membrane. The enzyme catalyses chloride(in) = chloride(out). Its activity is regulated as follows. Inhibited by TPMPA, a rho-specific antagonist, when forming a homopentamer. In terms of biological role, rho subunit of the pentameric ligand-gated chloride channels responsible for mediating the effects of gamma-aminobutyric acid (GABA), the major inhibitory neurotransmitter in the brain. Rho-containing GABA-gated chloride channels are a subclass of GABA(A) receptors (GABAARs) entirely composed of rho subunits, where GABA molecules bind at the rho intersubunit interfaces. When activated by GABA, rho-GABAARs selectively allow the flow of chloride anions across the cell membrane down their electrochemical gradient. The sequence is that of Gamma-aminobutyric acid receptor subunit rho-3 from Homo sapiens (Human).